We begin with the raw amino-acid sequence, 455 residues long: Growth/differentiation factor 6 (455 aa).

The first 22 residues, 1–22, serve as a signal peptide directing secretion; sequence MDTPRVLLSAVFLISFLWDLPG. Residues 23–335 constitute a propeptide that is removed on maturation; it reads FQQASISSSS…LPSPGRRRRR (313 aa). The disordered stretch occupies residues 29–93; it reads SSSSSSAELG…EPPGRGPRVV (65 aa). The segment covering 45 to 76 has biased composition (basic and acidic residues); it reads SRKEGKMQRAPRDSDAGREGQEPQPRPQDEPR. The span at 77–91 shows a compositional bias: low complexity; that stretch reads AQQPRAQEPPGRGPR. Asn114 carries N-linked (GlcNAc...) asparagine glycosylation. Disordered regions lie at residues 244 to 267 and 300 to 351; these read EAEA…GFGR and AEAA…KKSR. Positions 330–351 are enriched in basic residues; sequence GRRRRRTAFASRHGKRHGKKSR. 3 disulfide bridges follow: Cys354/Cys420, Cys383/Cys452, and Cys387/Cys454.

The protein belongs to the TGF-beta family. In terms of assembly, homodimer; disulfide-linked.

The protein resides in the secreted. In terms of biological role, growth factor that controls proliferation and cellular differentiation in the retina and bone formation. Plays a key role in regulating apoptosis during retinal development. Establishes dorsal-ventral positional information in the retina and controls the formation of the retinotectal map. Required for normal formation of bones and joints in the limbs, skull, digits and axial skeleton. Plays a key role in establishing boundaries between skeletal elements during development. Regulation of GDF6 expression seems to be a mechanism for evolving species-specific changes in skeletal structures. Seems to positively regulate differentiation of chondrogenic tissue through the growth factor receptors subunits BMPR1A, BMPR1B, BMPR2 and ACVR2A, leading to the activation of SMAD1-SMAD5-SMAD8 complex. The regulation of chondrogenic differentiation is inhibited by NOG. Also involved in the induction of adipogenesis from mesenchymal stem cells. This mechanism acts through the growth factor receptors subunits BMPR1A, BMPR2 and ACVR2A and the activation of SMAD1-SMAD5-SMAD8 complex and MAPK14/p38. The sequence is that of Growth/differentiation factor 6 (GDF6) from Homo sapiens (Human).